The sequence spans 68 residues: Ferredoxin Fdx (68 aa).

Residues cysteine 12, glutamine 13, alanine 16, cysteine 18, and cysteine 56 each coordinate [3Fe-4S] cluster.

Requires [3Fe-4S] cluster as cofactor.

Its function is as follows. Ferredoxin that is the redox partner of cytochrome CYP51, a sterol 14alpha-demethylase encoded by an adjacent gene. This Mycobacterium tuberculosis (strain ATCC 25618 / H37Rv) protein is Ferredoxin Fdx.